Consider the following 165-residue polypeptide: MSHPALTQLRALRYFKEIPALDSQLLDWLLLEDSMTKRFEQQGKTVSVTMIREGFVEQNEIPEELPLLPKESRYWLREILLCADGEPWLAGRTVVPVSTLSGPELALQKLGKTPLGRYLFTSSTLTRDFIEIGRDAGLWGRRSRLRLSGKPLLLTELFLPASPLY.

Substrate-binding residues include methionine 35, arginine 77, leucine 115, and glutamate 156.

This sequence belongs to the UbiC family. Monomer.

The protein resides in the cytoplasm. The catalysed reaction is chorismate = 4-hydroxybenzoate + pyruvate. The protein operates within cofactor biosynthesis; ubiquinone biosynthesis. Removes the pyruvyl group from chorismate, with concomitant aromatization of the ring, to provide 4-hydroxybenzoate (4HB) for the ubiquinone pathway. The protein is Chorismate pyruvate-lyase of Shigella sonnei (strain Ss046).